A 461-amino-acid polypeptide reads, in one-letter code: MQKIILVGKPNVGKSSLFNRLARQRIAITSEISGTTRDTNKAKIEVEGKDCLLIDSGGLDESSELFKNVKFKTLAEAKNSDIIIYMVDGKMAPSDEDRAIFYELCKLNLPIALVINKIDSKKDEQRAWEFINFGVKEIFEISVSHNTGIDELSQWIAGQLEDDVIKTDESEDFDDFLENFNDEGELESSENFEDRYIRVGIVGRVNVGKSSLLNALVKDARAVVSDIAGTTIDPVNEIYEHEGRIFEFVDTAGIRKRGKIEGIERYALNRTEKILENSDIALLVLDSSEPLTELDERIAGVANKFNLGMIIVLNKWDKSEREFDELVKEIKDRFKFLSYAPIISVSALGKKRIHKLYPLILEVYKNFTQKIQTSKLNEVIEEATKAHPIPREKGKSVKIYYAAQFGFAPPKIALIMNRPKCLHFSYKRYLINKLRQNFELSGVPIVLAPKKRGESDENEEQ.

EngA-type G domains follow at residues 2–164 and 197–368; these read QKII…EDDV and IRVG…KNFT. Residues 8-15, 55-59, 116-119, 203-210, 250-254, and 314-317 each bind GTP; these read GKPNVGKS, DSGGL, NKID, GRVNVGKS, DTAGI, and NKWD. The KH-like domain occupies 369–453; the sequence is QKIQTSKLNE…PIVLAPKKRG (85 aa).

Belongs to the TRAFAC class TrmE-Era-EngA-EngB-Septin-like GTPase superfamily. EngA (Der) GTPase family. As to quaternary structure, associates with the 50S ribosomal subunit.

Its function is as follows. GTPase that plays an essential role in the late steps of ribosome biogenesis. The sequence is that of GTPase Der from Campylobacter curvus (strain 525.92).